The chain runs to 140 residues: Small ribosomal subunit protein uS19 (140 aa).

This sequence belongs to the universal ribosomal protein uS19 family.

Functionally, protein S19 forms a complex with S13 that binds strongly to the 16S ribosomal RNA. The sequence is that of Small ribosomal subunit protein uS19 from Sulfolobus acidocaldarius (strain ATCC 33909 / DSM 639 / JCM 8929 / NBRC 15157 / NCIMB 11770).